Reading from the N-terminus, the 478-residue chain is 2,5-dioxopentanoate dehydrogenase (478 aa).

Residues 148–149, 172–175, and 225–226 contribute to the NADP(+) site; these read WN, KPAT, and GS. The active-site Proton acceptor is glutamate 249. The active-site Nucleophile is the cysteine 283. Glutamate 379 is a binding site for NADP(+).

It belongs to the aldehyde dehydrogenase family. In terms of assembly, homotetramer.

It catalyses the reaction 2,5-dioxopentanoate + NADP(+) + H2O = 2-oxoglutarate + NADPH + 2 H(+). Functionally, 2,5-dioxopentanoate dehydrogenase involved in the degradation of pentoses such as D-arabinose or D-xylose, a major component of hemicelluloses such as xylan. Catalyzes the fifth reaction in the pentose utilization pathway through dehydratation of 2,5-dioxopentanoate into 2-oxoglutarate. Also shows dehydrogenase activity toward glycolaldehyde and DL-glyceraldehyde. The chain is 2,5-dioxopentanoate dehydrogenase from Saccharolobus solfataricus (strain ATCC 35092 / DSM 1617 / JCM 11322 / P2) (Sulfolobus solfataricus).